Consider the following 492-residue polypeptide: Spore germination protein GerLA (492 aa).

3 helical membrane passes run 295-315 (IIAVLLPAMYVALVSYHQGLI), 384-404 (FLVIIIAVTAIATFSLPVYSI), and 410-430 (ILLFVFVLAATAFGLYGIILA).

The protein belongs to the GerABKA family.

Its subcellular location is the membrane. Contributes to the L-alanine germination response. This Bacillus cereus protein is Spore germination protein GerLA (gerLA).